The following is a 138-amino-acid chain: Small ribosomal subunit protein uS11c (138 aa).

The tract at residues 1–23 (MAKAIPRRSSRRNGRIGSRKSAR) is disordered.

This sequence belongs to the universal ribosomal protein uS11 family. In terms of assembly, part of the 30S ribosomal subunit.

The protein localises to the plastid. Its subcellular location is the chloroplast. The sequence is that of Small ribosomal subunit protein uS11c from Ipomoea purpurea (Common morning glory).